Consider the following 374-residue polypeptide: Translocating chain-associated membrane protein 1 (374 aa).

At 1–29 (MAIRKKSTKSPPVLSHEFVLQNHADIVSC) the chain is on the cytoplasmic side. Residues 30-50 (VAMVFLLGLMFEITAKASIIF) traverse the membrane as a helical segment. Over 51–76 (VTLQYNVTLPATEEQATESASLYYYG) the chain is Lumenal. Asn-56 carries N-linked (GlcNAc...) asparagine glycosylation. A helical membrane pass occupies residues 77-97 (IKDLATVFFYMLVAIIIHAVI). At 98-121 (QEYMLDKINRRMHFSKTKHSKFNE) the chain is on the cytoplasmic side. In terms of domain architecture, TLC spans 117–326 (SKFNESGQLS…NFQLRRWREH (210 aa)). Residues 122–142 (SGQLSAFYLFACVWGTFILIS) form a helical membrane-spanning segment. The Lumenal segment spans residues 143 to 159 (ENYISDPTILWRAYPHN). A helical transmembrane segment spans residues 160-180 (LMTFQMKFFYISQLAYWLHAF). Residues 181 to 192 (PELYFQKTKRED) are Cytoplasmic-facing. A helical transmembrane segment spans residues 193 to 213 (IPRQLVYIGLYLFHIAGAYLL). A topological domain (lumenal) is located at residue Asn-214. A helical membrane pass occupies residues 215–235 (LNHLGLVLLVLHYFVEFLFHI). Residues 236–251 (SRLFYFSNEKYQKGFS) are Cytoplasmic-facing. Residues 252-272 (LWAVLFVLGRLLTLILSVLTV) form a helical membrane-spanning segment. Residues 273–297 (GFGLARAENQKLDFSTGNFNVLAVR) lie on the Lumenal side of the membrane. The helical transmembrane segment at 298-318 (IAVLASICITQAFMVWKFINF) threads the bilayer. Residues 319–374 (QLRRWREHSAFQAPAVKKKPTVTKGRSSKKGTENGVNGTLTSNVADSPRNKKEKSS) are Cytoplasmic-facing. The segment covering 334-347 (VKKKPTVTKGRSSK) has biased composition (basic residues). Residues 334–374 (VKKKPTVTKGRSSKKGTENGVNGTLTSNVADSPRNKKEKSS) are disordered. Residues 352–363 (NGVNGTLTSNVA) are compositionally biased toward polar residues. Residue Ser-365 is modified to Phosphoserine.

Belongs to the TRAM family. In terms of assembly, interacts with SEC61B. May interact with Derlin-1/DERL1. Post-translationally, N-glycosylated.

Its subcellular location is the endoplasmic reticulum membrane. In terms of biological role, involved in the translocation of nascent protein chains into or through the endoplasmic reticulum (ER) membrane by facilitating the proper chain positioning at the SEC61 channel. Regulates the exposure of nascent secretory protein chain to the cytosol during translocation into the ER. May affect the phospholipid bilayer in the vicinity of the lateral gate of the SEC61 channel, thereby facilitating ER protein transport. Intimately associates with transmembrane (TM) domain of nascent membrane proteins during the entire integration process into the ER membrane. Associates with the second TM domain of G-protein-coupled receptor opsin/OPSD nascent chain in the ER membrane, which may facilitate its integration into the membrane. Under conditions of ER stress, participates in the disposal of misfolded ER membrane proteins during the unfolded protein response (UPR), an integrated stress response (ISR) pathway, by selectively retrotranslocating misfolded ER-membrane proteins from the ER into the cytosol where they are ubiquitinated and degraded by the proteasome. The protein is Translocating chain-associated membrane protein 1 (TRAM1) of Pongo abelii (Sumatran orangutan).